Here is a 131-residue protein sequence, read N- to C-terminus: uncharacterized protein (131 aa).

Helical transmembrane passes span 68–88 (VVRA…VAPI) and 94–114 (VLGA…IVAI).

Its subcellular location is the cell membrane. This is an uncharacterized protein from Methanocaldococcus jannaschii (strain ATCC 43067 / DSM 2661 / JAL-1 / JCM 10045 / NBRC 100440) (Methanococcus jannaschii).